The chain runs to 210 residues: ATP-dependent Clp protease proteolytic subunit (210 aa).

Catalysis depends on S114, which acts as the Nucleophile. The active site involves H139.

The protein belongs to the peptidase S14 family. As to quaternary structure, fourteen ClpP subunits assemble into 2 heptameric rings which stack back to back to give a disk-like structure with a central cavity, resembling the structure of eukaryotic proteasomes.

The protein localises to the cytoplasm. It catalyses the reaction Hydrolysis of proteins to small peptides in the presence of ATP and magnesium. alpha-casein is the usual test substrate. In the absence of ATP, only oligopeptides shorter than five residues are hydrolyzed (such as succinyl-Leu-Tyr-|-NHMec, and Leu-Tyr-Leu-|-Tyr-Trp, in which cleavage of the -Tyr-|-Leu- and -Tyr-|-Trp bonds also occurs).. Its function is as follows. Cleaves peptides in various proteins in a process that requires ATP hydrolysis. Has a chymotrypsin-like activity. Plays a major role in the degradation of misfolded proteins. The sequence is that of ATP-dependent Clp protease proteolytic subunit from Janthinobacterium sp. (strain Marseille) (Minibacterium massiliensis).